The primary structure comprises 772 residues: Delta-like protein A (772 aa).

Positions 1 to 20 (MGRHLLLLLFSILYMLLCQA) are cleaved as a signal peptide. Residues 21-536 (SSSGVFELKL…SQIASDVPWT (516 aa)) lie on the Extracellular side of the membrane. Residues 179 to 223 (FVCDEHYYGEGCSVFCRPRDDAFGHFTCGERGEIICDAGWKGQYC) enclose the DSL domain. 26 disulfide bridges follow: Cys-181–Cys-190, Cys-194–Cys-206, Cys-214–Cys-223, Cys-228–Cys-239, Cys-232–Cys-245, Cys-259–Cys-270, Cys-265–Cys-276, Cys-278–Cys-287, Cys-294–Cys-306, Cys-300–Cys-316, Cys-318–Cys-327, Cys-334–Cys-345, Cys-339–Cys-354, Cys-356–Cys-365, Cys-372–Cys-383, Cys-377–Cys-393, Cys-395–Cys-404, Cys-411–Cys-422, Cys-416–Cys-431, Cys-433–Cys-442, Cys-449–Cys-460, Cys-454–Cys-469, Cys-471–Cys-480, Cys-487–Cys-498, Cys-492–Cys-507, and Cys-509–Cys-518. 3 consecutive EGF-like domains span residues 225-257 (EPIC…RYCD), 257-288 (DECI…LFCN), and 290-328 (DLNY…ASCE). The EGF-like 4; calcium-binding domain occupies 330–366 (EVNECTGNPCRNGGSCTDMENTYSCTCPPGFYGKNCE). EGF-like domains are found at residues 368-405 (SAMT…FNCE), 407-443 (KIDH…MNCD), 445-481 (AGDE…RNCS), and 483-519 (PVSR…RNCQ). N-linked (GlcNAc...) asparagine glycosylation occurs at Asn-479. Residues 537-557 (AVGSGVLLVLLLVVACAVVVV) traverse the membrane as a helical segment. Topologically, residues 558–772 (CVRSKVQQRR…KDECVIATEV (215 aa)) are cytoplasmic. A disordered region spans residues 688–722 (EEKRRKRLKSDASEKSKYSESRYSESKYSESKYSE). Over residues 696-722 (KSDASEKSKYSESRYSESKYSESKYSE) the composition is skewed to basic and acidic residues.

In terms of assembly, interacts with mib. In terms of processing, ubiquitinated by mib, leading to its endocytosis and subsequent degradation. Ubiquitinated by the ECS(ASB11) complex, leading to its degradation by the proteasome. As to expression, expressed in nervous system. In the developing nervous system, it is expressed in overlapping regions with deltaB (dlb) and deltaD (dld); in the neural plate, dla is expressed in patches of contiguous cells with dld, while dlb is confined to scattered cells within those patches that will differentiate as neurons. In 24 hours embryos, expressed in the hindbrain in stripes adjacent to rhombomere boundaries, but not in the actual boundary cells. During gastrulation and tail formation, expressed in embryonic midline cells. Expressed in hair cells of inner ear.

The protein localises to the membrane. Functionally, acts as a ligand for Notch receptors and is involved in primary neurogenesis. Can activate Notch receptors, thereby playing a key role in lateral inhibition, a process that prevents the immediate neighbors of each nascent neural cell from simultaneously embarking on neural differentiation. Required for boundary formation during segmentation of the hindbrain. Required for midline cell fate specification prior to germ layer formation; regulates specification of floorplate, notochord and hypochord. In inner ear, it prevents adjacent cells from adopting the same cell fate. Plays a role in angiogenesis. The polypeptide is Delta-like protein A (dla) (Danio rerio (Zebrafish)).